The chain runs to 1002 residues: UPF0182 protein Mvan_1814 (1002 aa).

A run of 7 helical transmembrane segments spans residues 16 to 36, 61 to 81, 112 to 132, 174 to 194, 209 to 229, 258 to 278, and 286 to 306; these read VMIA…RLVD, LLLF…AMAL, LVGI…AQNY, FAAT…FGGI, IQLI…YWLD, KLIL…AIVL, and IGVV…PLVV. A disordered region spans residues 891 to 958; it reads LFGPGADATA…TGPTQLSAGK (68 aa). Over residues 893-923 the composition is skewed to low complexity; it reads GPGADATATGPAATEPPAGQAPQPQGNNQPP. A compositionally biased stretch (pro residues) spans 937 to 950; sequence PQQPEVPVAVPPTG.

The protein belongs to the UPF0182 family.

The protein localises to the cell membrane. The chain is UPF0182 protein Mvan_1814 from Mycolicibacterium vanbaalenii (strain DSM 7251 / JCM 13017 / BCRC 16820 / KCTC 9966 / NRRL B-24157 / PYR-1) (Mycobacterium vanbaalenii).